The following is a 461-amino-acid chain: E3 ubiquitin-protein ligase parkin (461 aa).

One can recognise a Ubiquitin-like domain in the interval 30–90 (VNIYVKSNVG…DSTVIEVLDF (61 aa)). Ser92 is modified (phosphoserine). The RING-type 0; atypical zinc finger occupies 145–227 (AHFFIYCANP…SQGENDTAVP (83 aa)). Residues Cys151, Cys155, Cys167, and Cys170 each contribute to the Zn(2+) site. Thr176 is modified (phosphothreonine). Zn(2+) is bound by residues Cys197, Cys202, Cys213, His216, Cys240, Cys243, Cys255, His259, Cys262, Cys265, Cys291, Cys295, Cys334, Cys339, Cys354, Cys356, Cys361, Cys364, His369, Cys373, Cys415, and Cys418. Positions 236-461 (KKIPCLACTD…RDCMASHWFG (226 aa)) are TRIAD supradomain. Residues 240–295 (CLACTDICDPVLVFSCDNRHVTCLECFKNYCGSRLKDRQFLSHPDFGYTLPCPAGC) form an RING-type 1 zinc finger. 2 IBR-type zinc fingers span residues 315–373 (EQYH…LGEC) and 411–452 (LTKP…PWER). An RING-type 2; atypical zinc finger spans residues 415–446 (CPKCRTSTERAGGCMHMICTRANCGFHWCWVC). Residue Cys428 is part of the active site. Cys433, Cys438, Cys443, Cys446, Cys454, and His458 together coordinate Zn(2+).

This sequence belongs to the RBR family. Parkin subfamily. Forms an E3 ubiquitin ligase complex with E2 ubiquitin-conjugating enzymes. In terms of processing, auto-ubiquitinates in an E2-dependent manner leading to its own degradation. Post-translationally, phosphorylated. Activation requires phosphorylation at Ser-92 by Pink1 and binding to Pink1-phosphorylated polyubiquitin chains. Phosphorylation at Thr-176 by Pink1 is also important for mitochondrial localization.

It localises to the mitochondrion. The protein localises to the cytoplasm. The protein resides in the cytosol. It carries out the reaction [E2 ubiquitin-conjugating enzyme]-S-ubiquitinyl-L-cysteine + [acceptor protein]-L-lysine = [E2 ubiquitin-conjugating enzyme]-L-cysteine + [acceptor protein]-N(6)-ubiquitinyl-L-lysine.. The protein operates within protein modification; protein ubiquitination. Its activity is regulated as follows. In the autoinhibited state the side chain of Phe-460 inserts into a hydrophobic groove in RING-0, occluding the ubiquitin acceptor site Cys-428, whereas the REP repressor element binds RING-1 and blocks its E2-binding site. Activation of park requires 2 steps: (1) phosphorylation at Ser-92 by Pink1 and (2) binding to phosphorylated ubiquitin, leading to unlock repression of the catalytic Cys-428 by the RING-0 region via an allosteric mechanism and converting park to its fully-active form. According to another report, phosphorylation at Ser-92 by Pink1 is not essential for activation and only binding to phosphorylated ubiquitin is essential to unlock repression. E3 ubiquitin-protein ligase which accepts ubiquitin from E2 ubiquitin-conjugating enzymes in the form of a thioester and then directly transfers the ubiquitin to targeted substrates, such as Marf, Opa1, Sep1, Tom20 and porin. Mediates monoubiquitination as well as 'Lys-6', 'Lys-11', 'Lys-48'-linked and 'Lys-63'-linked polyubiquitination of substrates, depending on the context. Protects against mitochondrial dysfunction during cellular stress, by acting downstream of Pink1, to coordinate mitochondrial quality control mechanisms that remove and replace dysfunctional mitochondrial components. Depending on the severity of mitochondrial damage and/or dysfunction, activity ranges from preventing apoptosis and stimulating mitochondrial biogenesis to regulating mitochondrial dynamics and eliminating severely damaged mitochondria via mitophagy. Appears to be particularly important in maintaining the physiology and function of cells with high energy demands that are undergoing stress or altered metabolic environment, including spermatids, muscle cells and neurons such as the dopaminergic (DA) neurons. Activation and recruitment onto the outer membrane of damaged/dysfunctional mitochondria (OMM) requires Pink1-mediated phosphorylation of both park and ubiquitin. In depolarized mitochondria, mediates the decision between mitophagy or preventing apoptosis by inducing either the poly- or monoubiquitination of porin/VDAC; polyubiquitination of porin promotes mitophagy, while monoubiquitination of porin decreases mitochondrial calcium influx which ultimately inhibits apoptosis. When cellular stress results in irreversible mitochondrial damage, promotes the autophagic degradation of dysfunctional depolarized mitochondria (mitophagy) by promoting the ubiquitination of mitochondrial proteins. Preferentially assembles 'Lys-6'-, 'Lys-11'- and 'Lys-63'-linked polyubiquitin chains following mitochondrial damage, leading to mitophagy. In developing tissues, inhibits JNK-mediated apoptosis by negatively regulating bsk transcription. The Pink1-park pathway also promotes fission and/or inhibits fusion of damaged mitochondria by mediating the ubiquitination and subsequent degradation of proteins involved in mitochondrial fusion/fission such as Marf and Opa1. This prevents the refusion of unhealthy mitochondria with the healthy mitochondrial network and/or initiates mitochondrial fragmentation facilitating their later engulfment by autophagosomes. Regulates motility of damaged mitochondria by phosphorylating Miro which likely promotes its park-dependent degradation by the proteasome; in motor neurons, this inhibits mitochondrial intracellular anterograde transport along the axons which probably increases the chance of the mitochondria being eliminated in the soma. The Pink1-park pathway is also involved in mitochondrial regeneration processes such as promoting mitochondrial biogenesis, activating localized mitochondrial repair, promoting selective turnover of mitochondrial proteins and initiating the mitochondrial import of endogenous proteins. Involved in mitochondrial biogenesis via the ubiquitination of transcriptional repressor Paris which leads to its subsequent proteasomal degradation and allows activation of the transcription factor srl. Promotes localized mitochondrial repair by activating the translation of specific nuclear-encoded mitochondrial RNAs (nc-mtRNAs) on the mitochondrial surface, including several key electron transport chain component nc-mtRNAs. This is E3 ubiquitin-protein ligase parkin from Pediculus humanus subsp. corporis (Body louse).